The primary structure comprises 194 residues: Large ribosomal subunit protein eL15 (194 aa).

Residues 164–194 (SAGKKGRGLRNKGKGAEKVRPSVRANKGKTK) form a disordered region. A compositionally biased stretch (basic residues) spans 167–176 (KKGRGLRNKG).

It belongs to the eukaryotic ribosomal protein eL15 family.

This Thermococcus gammatolerans (strain DSM 15229 / JCM 11827 / EJ3) protein is Large ribosomal subunit protein eL15.